Consider the following 283-residue polypeptide: Pantothenate synthetase (283 aa).

Met30–His37 provides a ligand contact to ATP. His37 functions as the Proton donor in the catalytic mechanism. A (R)-pantoate-binding site is contributed by Gln61. Gln61 lines the beta-alanine pocket. Gly147 to Asp150 is a binding site for ATP. Gln153 is a binding site for (R)-pantoate. ATP is bound by residues Val176 and Val184 to Arg187.

This sequence belongs to the pantothenate synthetase family. As to quaternary structure, homodimer.

Its subcellular location is the cytoplasm. It carries out the reaction (R)-pantoate + beta-alanine + ATP = (R)-pantothenate + AMP + diphosphate + H(+). Its pathway is cofactor biosynthesis; (R)-pantothenate biosynthesis; (R)-pantothenate from (R)-pantoate and beta-alanine: step 1/1. Catalyzes the condensation of pantoate with beta-alanine in an ATP-dependent reaction via a pantoyl-adenylate intermediate. The protein is Pantothenate synthetase of Chlorobium limicola (strain DSM 245 / NBRC 103803 / 6330).